Here is a 129-residue protein sequence, read N- to C-terminus: M-zodatoxin-Lt8c (129 aa).

Residues 1-20 (MKYFVVALALVAAFACIAES) form the signal peptide. The propeptide occupies 21–60 (KPAESEHELAEVEEENELADLEDAVWLEHLADLSDLEEAR). Positions 57–60 (EEAR) match the Processing quadruplet motif motif.

Cleavage of the propeptide depends on the processing quadruplet motif (XXXR, with at least one of X being E). In terms of tissue distribution, expressed by the venom gland.

It localises to the secreted. In terms of biological role, insecticidal, cytolytic and antimicrobial peptide. Forms voltage-dependent, ion-permeable channels in membranes. At high concentration causes cell membrane lysis. This is M-zodatoxin-Lt8c (cit 1-3) from Lachesana tarabaevi (Spider).